We begin with the raw amino-acid sequence, 315 residues long: Acetyl-coenzyme A carboxylase carboxyl transferase subunit alpha (315 aa).

Residues 36–289 (LGKKRLELME…RKAVAAELKV (254 aa)) enclose the CoA carboxyltransferase C-terminal domain.

It belongs to the AccA family. As to quaternary structure, acetyl-CoA carboxylase is a heterohexamer composed of biotin carboxyl carrier protein (AccB), biotin carboxylase (AccC) and two subunits each of ACCase subunit alpha (AccA) and ACCase subunit beta (AccD).

It is found in the cytoplasm. The catalysed reaction is N(6)-carboxybiotinyl-L-lysyl-[protein] + acetyl-CoA = N(6)-biotinyl-L-lysyl-[protein] + malonyl-CoA. It participates in lipid metabolism; malonyl-CoA biosynthesis; malonyl-CoA from acetyl-CoA: step 1/1. In terms of biological role, component of the acetyl coenzyme A carboxylase (ACC) complex. First, biotin carboxylase catalyzes the carboxylation of biotin on its carrier protein (BCCP) and then the CO(2) group is transferred by the carboxyltransferase to acetyl-CoA to form malonyl-CoA. This chain is Acetyl-coenzyme A carboxylase carboxyl transferase subunit alpha, found in Francisella philomiragia subsp. philomiragia (strain ATCC 25017 / CCUG 19701 / FSC 153 / O#319-036).